The chain runs to 710 residues: Ferrioxamine receptor (710 aa).

The first 26 residues, 1 to 26 (MFSAFIIKRSAILCSLAMFIPLASIA), serve as a signal peptide directing secretion. Positions 28–35 (DTIEVTAK) match the TonB box motif. The next 30 beta stranded transmembrane spans lie at 29-37 (TIEVTAKAG), 65-73 (TAQSVSVVT), 91-99 (YTPGVFTGF), 106-114 (YDTVALRGF), 137-145 (NVLQVDPWF), 152-160 (IKGPSSALY), 180-188 (SEGHFRLTA), 194-202 (QVAAFDYTD), 208-216 (WAFRLTGIT), 259-267 (GGYHSAVPA), 271-279 (IYGQKLSRG), 293-301 (WQQIYSYEF), 309-317 (WSFRQNASY), 353-361 (FAVDNQLEA), 370-378 (HKVLLGVDF), 427-435 (YEQSGVYLQ), 443-451 (WHLNLSGRY), 476-484 (GRASLLYSF), 491-499 (YVSYSQAIT), 517-525 (EQYEVGIIY), 531-539 (TSLYSAALY), 555-563 (YYVPAGKVN), 567-575 (LELEARSQI), 579-587 (LSVIAGYTY), 610-618 (NMASLWAQY), 624-632 (INVGAGIRY), 649-657 (YTLGDASVR), 671-679 (FVQLNVNNI), 684-692 (YVAACYSTS), and 702-710 (VQATVGYDF). In terms of domain architecture, TBDR plug spans 61 to 174 (PLILTAQSVS…PGGVVMMTSK (114 aa)). The region spanning 181–710 (EGHFRLTAGN…SVQATVGYDF (530 aa)) is the TBDR beta-barrel domain. A TonB C-terminal box motif is present at residues 693 to 710 (YCYWGAERSVQATVGYDF).

Belongs to the TonB-dependent receptor family.

It is found in the cell outer membrane. Its function is as follows. Ferrioxamine binding and uptake, in association with the TonB protein. The polypeptide is Ferrioxamine receptor (foxA) (Yersinia enterocolitica).